Reading from the N-terminus, the 491-residue chain is Bifunctional protein GlmU (491 aa).

A pyrophosphorylase region spans residues 1 to 238 (MTTQPAVPAA…EWEIRGVNDR (238 aa)). UDP-N-acetyl-alpha-D-glucosamine is bound by residues 14-17 (LAAG), Lys28, Gln81, 86-87 (GT), 110-112 (YGD), Gly149, Glu163, Asn178, and Asn236. Mg(2+) is bound at residue Asp112. Mg(2+) is bound at residue Asn236. The segment at 239-259 (AQLADLAAEANRRTLRRWMLA) is linker. Residues 260–491 (GVTIADPATT…TASTDREIQP (232 aa)) form an N-acetyltransferase region. 2 residues coordinate UDP-N-acetyl-alpha-D-glucosamine: Arg341 and Lys359. His371 serves as the catalytic Proton acceptor. UDP-N-acetyl-alpha-D-glucosamine-binding residues include Tyr374 and Asn385. Residues Ala388, 394 to 395 (NY), Ser413, and Ala431 contribute to the acetyl-CoA site. The interval 460 to 491 (AKRPGTPAAEAAQRANDESTGTTASTDREIQP) is disordered.

The protein in the N-terminal section; belongs to the N-acetylglucosamine-1-phosphate uridyltransferase family. This sequence in the C-terminal section; belongs to the transferase hexapeptide repeat family. In terms of assembly, homotrimer. The cofactor is Mg(2+).

It is found in the cytoplasm. The enzyme catalyses alpha-D-glucosamine 1-phosphate + acetyl-CoA = N-acetyl-alpha-D-glucosamine 1-phosphate + CoA + H(+). It carries out the reaction N-acetyl-alpha-D-glucosamine 1-phosphate + UTP + H(+) = UDP-N-acetyl-alpha-D-glucosamine + diphosphate. It participates in nucleotide-sugar biosynthesis; UDP-N-acetyl-alpha-D-glucosamine biosynthesis; N-acetyl-alpha-D-glucosamine 1-phosphate from alpha-D-glucosamine 6-phosphate (route II): step 2/2. Its pathway is nucleotide-sugar biosynthesis; UDP-N-acetyl-alpha-D-glucosamine biosynthesis; UDP-N-acetyl-alpha-D-glucosamine from N-acetyl-alpha-D-glucosamine 1-phosphate: step 1/1. It functions in the pathway bacterial outer membrane biogenesis; LPS lipid A biosynthesis. Its function is as follows. Catalyzes the last two sequential reactions in the de novo biosynthetic pathway for UDP-N-acetylglucosamine (UDP-GlcNAc). The C-terminal domain catalyzes the transfer of acetyl group from acetyl coenzyme A to glucosamine-1-phosphate (GlcN-1-P) to produce N-acetylglucosamine-1-phosphate (GlcNAc-1-P), which is converted into UDP-GlcNAc by the transfer of uridine 5-monophosphate (from uridine 5-triphosphate), a reaction catalyzed by the N-terminal domain. This Kineococcus radiotolerans (strain ATCC BAA-149 / DSM 14245 / SRS30216) protein is Bifunctional protein GlmU.